The primary structure comprises 155 residues: UPF0178 protein ACIAD2644 (155 aa).

Residues Gly-120–Ala-155 are disordered.

It belongs to the UPF0178 family.

This is UPF0178 protein ACIAD2644 from Acinetobacter baylyi (strain ATCC 33305 / BD413 / ADP1).